The following is a 162-amino-acid chain: ATP synthase subunit delta, mitochondrial (162 aa).

The N-terminal 24 residues, methionine 1–tyrosine 24, are a transit peptide targeting the mitochondrion.

In terms of assembly, F-type ATP synthases have 2 components, the catalytic core F(1) and the membrane-embedded component F(0), linked together by a central stalk and a peripheral stalk. The central stalk, also called rotor shaft, is often seen as part of F(1). The peripheral stalk is seen as part of F(0). F(0) contains the membrane channel next to the rotor. F-type ATP synthases form dimers but each monomer functions independently in ATP generation. The dimer consists of 17 different polypeptides: ATP1 (subunit alpha, 3 molecules per monomer, part of F(1)), ATP2 (subunit beta, 3 copies per monomer, part of F(1)), ATP3 (subunit gamma, part of the central stalk), ATP4 (subunit b, part of the peripheral stalk), ATP5/OSCP (subunit 5/OSCP, part of the peripheral stalk), ATP6 (subunit a, part of the peripheral stalk), ATP7 (subunit d, part of the peripheral stalk), ATP8 (subunit 8, part of the peripheral stalk), OLI1 (subunit c, part of the rotor, 10 molecules per monomer), ATP14 (subunit h, part of the peripheral stalk), ATP15 (subunit epsilon, part of the central stalk), ATP16 (subunit delta, part of the central stalk), ATP17 (subunit f, part of the peripheral stalk), ATP18 (subunit i/j, part of the peripheral stalk), ATP19 (subunit k, dimer-specific, at interface between monomers), ATP20 (subunit g, at interface between monomers), TIM11 (subunit e, at interface between monomers).

The protein localises to the mitochondrion inner membrane. Mitochondrial membrane ATP synthase (F(1)F(0) ATP synthase or Complex V) produces ATP from ADP in the presence of a proton gradient across the membrane which is generated by electron transport complexes of the respiratory chain. F-type ATP synthases consist of two structural domains, F(1) - containing the extramembraneous catalytic core, and F(0) - containing the membrane proton channel, linked together by a central stalk and a peripheral stalk. During catalysis, ATP synthesis in the catalytic domain of F(1) is coupled via a rotary mechanism of the central stalk subunits to proton translocation. Part of the complex F(1) domain and the central stalk which is part of the complex rotary element. Rotation of the central stalk against the surrounding alpha/ATP1(3)beta/ATP2(3) subunits leads to hydrolysis of ATP in three separate catalytic sites on the beta/ATP2 subunits. In Yarrowia lipolytica (strain CLIB 122 / E 150) (Yeast), this protein is ATP synthase subunit delta, mitochondrial.